Consider the following 177-residue polypeptide: Large ribosomal subunit protein uL6 (177 aa).

This sequence belongs to the universal ribosomal protein uL6 family. As to quaternary structure, part of the 50S ribosomal subunit.

This protein binds to the 23S rRNA, and is important in its secondary structure. It is located near the subunit interface in the base of the L7/L12 stalk, and near the tRNA binding site of the peptidyltransferase center. This Rickettsia prowazekii (strain Madrid E) protein is Large ribosomal subunit protein uL6.